Consider the following 465-residue polypeptide: Mitochondrial F-box protein MFB1 (465 aa).

The F-box domain maps to 14–60; sequence ERSLTNLPLNLLFRILSHLDMNDLQNIGKTCTLLRMLANENIVYRNA. Positions 253-279 are disordered; it reads FTKSRDPDYKEMTPTSTESSDSITRLR. Over residues 254-263 the composition is skewed to basic and acidic residues; it reads TKSRDPDYKE. Residues 265–275 show a composition bias toward polar residues; that stretch reads TPTSTESSDSI.

The protein localises to the mitochondrion. This Saccharomyces cerevisiae (strain ATCC 204508 / S288c) (Baker's yeast) protein is Mitochondrial F-box protein MFB1 (MFB1).